The sequence spans 150 residues: Urease accessory protein UreE (150 aa).

The protein belongs to the UreE family.

The protein localises to the cytoplasm. In terms of biological role, involved in urease metallocenter assembly. Binds nickel. Probably functions as a nickel donor during metallocenter assembly. In Staphylococcus aureus (strain Mu3 / ATCC 700698), this protein is Urease accessory protein UreE.